The chain runs to 872 residues: Alanine--tRNA ligase (872 aa).

Residues histidine 563, histidine 567, cysteine 665, and histidine 669 each contribute to the Zn(2+) site.

It belongs to the class-II aminoacyl-tRNA synthetase family. The cofactor is Zn(2+).

It is found in the cytoplasm. The catalysed reaction is tRNA(Ala) + L-alanine + ATP = L-alanyl-tRNA(Ala) + AMP + diphosphate. Its function is as follows. Catalyzes the attachment of alanine to tRNA(Ala) in a two-step reaction: alanine is first activated by ATP to form Ala-AMP and then transferred to the acceptor end of tRNA(Ala). Also edits incorrectly charged Ser-tRNA(Ala) and Gly-tRNA(Ala) via its editing domain. The protein is Alanine--tRNA ligase of Bacteroides fragilis (strain YCH46).